The chain runs to 321 residues: Lipoyl synthase (321 aa).

7 residues coordinate [4Fe-4S] cluster: Cys68, Cys73, Cys79, Cys94, Cys98, Cys101, and Ser308. The 218-residue stretch at 80–297 folds into the Radical SAM core domain; the sequence is FNHGTATFMI…KEEAMAMGFT (218 aa).

It belongs to the radical SAM superfamily. Lipoyl synthase family. [4Fe-4S] cluster serves as cofactor.

It localises to the cytoplasm. It carries out the reaction [[Fe-S] cluster scaffold protein carrying a second [4Fe-4S](2+) cluster] + N(6)-octanoyl-L-lysyl-[protein] + 2 oxidized [2Fe-2S]-[ferredoxin] + 2 S-adenosyl-L-methionine + 4 H(+) = [[Fe-S] cluster scaffold protein] + N(6)-[(R)-dihydrolipoyl]-L-lysyl-[protein] + 4 Fe(3+) + 2 hydrogen sulfide + 2 5'-deoxyadenosine + 2 L-methionine + 2 reduced [2Fe-2S]-[ferredoxin]. The protein operates within protein modification; protein lipoylation via endogenous pathway; protein N(6)-(lipoyl)lysine from octanoyl-[acyl-carrier-protein]: step 2/2. Functionally, catalyzes the radical-mediated insertion of two sulfur atoms into the C-6 and C-8 positions of the octanoyl moiety bound to the lipoyl domains of lipoate-dependent enzymes, thereby converting the octanoylated domains into lipoylated derivatives. The sequence is that of Lipoyl synthase from Serratia proteamaculans (strain 568).